Consider the following 740-residue polypeptide: ATP-dependent RNA helicase DBP4 (740 aa).

Residues 1–37 (MKKRADPRKIKREEHKQKLSKLQERVDNFGEDEADKE) form a disordered region. Positions 7–28 (PRKIKREEHKQKLSKLQERVDN) are enriched in basic and acidic residues. A Q motif motif is present at residues 39–67 (SKFEELPLSEATIEGLKNSHYVTCTDVQK). The region spanning 70–244 (IPPALQGHDL…RLSLADPKYI (175 aa)) is the Helicase ATP-binding domain. 83–90 (ARTGSGKT) contacts ATP. The DEAD box motif lies at 192–195 (DEAD). The Helicase C-terminal domain maps to 257-421 (NLEQNYVCVE…TIRPNKKKSI (165 aa)). Residues 565–740 (RQDHNLESDD…ESLTSKLLKK (176 aa)) form a disordered region. Residues 636–662 (QVKEFVDRETKDMEEADVGDKELVKQK) are compositionally biased toward basic and acidic residues. 2 stretches are compositionally biased toward acidic residues: residues 680–695 (DEYD…SEEE) and 709–731 (SSDE…EDLE).

Belongs to the DEAD box helicase family. DDX10/DBP4 subfamily. Interacts with the U3 and U14 snoRNAs. Associates with pre-ribosomal complexes.

It is found in the nucleus. The protein localises to the nucleolus. The catalysed reaction is ATP + H2O = ADP + phosphate + H(+). ATP-dependent RNA helicase required for ribosome biogenesis. Involved in the release of U14 snoRNA in pre-ribosomal complexes. Required for pre-rRNA cleavage at site A2. This Yarrowia lipolytica (strain CLIB 122 / E 150) (Yeast) protein is ATP-dependent RNA helicase DBP4 (DBP4).